We begin with the raw amino-acid sequence, 146 residues long: uncharacterized protein (146 aa).

This is an uncharacterized protein from Aquifex aeolicus (strain VF5).